A 312-amino-acid chain; its full sequence is Ribosomal protein L11 methyltransferase (312 aa).

Positions 160, 181, 203, and 246 each coordinate S-adenosyl-L-methionine.

It belongs to the methyltransferase superfamily. PrmA family.

Its subcellular location is the cytoplasm. The catalysed reaction is L-lysyl-[protein] + 3 S-adenosyl-L-methionine = N(6),N(6),N(6)-trimethyl-L-lysyl-[protein] + 3 S-adenosyl-L-homocysteine + 3 H(+). In terms of biological role, methylates ribosomal protein L11. The protein is Ribosomal protein L11 methyltransferase of Staphylococcus aureus (strain USA300).